The primary structure comprises 74 residues: Lambda-hexatoxin-Hv1d (74 aa).

An N-terminal signal peptide occupies residues 1–22 (MNTATCFIVLLVVATVIGGIEA). Residues 23–35 (GESDMRKDVMGLF) constitute a propeptide that is removed on maturation. Disulfide bonds link cysteine 40/cysteine 54, cysteine 47/cysteine 59, cysteine 50/cysteine 51, and cysteine 53/cysteine 69.

Belongs to the neurotoxin 11 (kappa toxin) family. In terms of tissue distribution, expressed by the venom gland.

The protein resides in the secreted. In terms of biological role, this excitatory toxin inhibits insect calcium-activated potassium (KCa) channels (Slo-type). This is Lambda-hexatoxin-Hv1d from Hadronyche versuta (Blue mountains funnel-web spider).